A 199-amino-acid chain; its full sequence is Recombination protein RecR (199 aa).

A C4-type zinc finger spans residues 57–72 (CPICGNITEKEICDIC). One can recognise a Toprim domain in the interval 80–176 (TTIMVVEQPK…KVTRLAAGLS (97 aa)).

It belongs to the RecR family.

In terms of biological role, may play a role in DNA repair. It seems to be involved in an RecBC-independent recombinational process of DNA repair. It may act with RecF and RecO. The sequence is that of Recombination protein RecR from Lactobacillus acidophilus (strain ATCC 700396 / NCK56 / N2 / NCFM).